We begin with the raw amino-acid sequence, 220 residues long: Cytidylate kinase (220 aa).

10 to 18 (GPASSGKST) contributes to the ATP binding site.

Belongs to the cytidylate kinase family. Type 1 subfamily.

The protein localises to the cytoplasm. The catalysed reaction is CMP + ATP = CDP + ADP. It carries out the reaction dCMP + ATP = dCDP + ADP. In Lactococcus lactis subsp. cremoris (strain SK11), this protein is Cytidylate kinase.